Reading from the N-terminus, the 262-residue chain is Cytochrome c oxidase subunit 3 (262 aa).

7 consecutive transmembrane segments (helical) span residues 16–36, 39–59, 83–103, 128–148, 160–180, 198–218, and 241–261; these read PWPY…VVYF, SQTW…IVWW, GMLL…WAFF, FSVP…VTWA, AING…LQAM, FFVA…FLAV, and WYWH…YWWG.

This sequence belongs to the cytochrome c oxidase subunit 3 family. Component of the cytochrome c oxidase (complex IV, CIV), a multisubunit enzyme composed of a catalytic core of 3 subunits and several supernumerary subunits. The complex exists as a monomer or a dimer and forms supercomplexes (SCs) in the inner mitochondrial membrane with ubiquinol-cytochrome c oxidoreductase (cytochrome b-c1 complex, complex III, CIII).

Its subcellular location is the mitochondrion inner membrane. It catalyses the reaction 4 Fe(II)-[cytochrome c] + O2 + 8 H(+)(in) = 4 Fe(III)-[cytochrome c] + 2 H2O + 4 H(+)(out). In terms of biological role, component of the cytochrome c oxidase, the last enzyme in the mitochondrial electron transport chain which drives oxidative phosphorylation. The respiratory chain contains 3 multisubunit complexes succinate dehydrogenase (complex II, CII), ubiquinol-cytochrome c oxidoreductase (cytochrome b-c1 complex, complex III, CIII) and cytochrome c oxidase (complex IV, CIV), that cooperate to transfer electrons derived from NADH and succinate to molecular oxygen, creating an electrochemical gradient over the inner membrane that drives transmembrane transport and the ATP synthase. Cytochrome c oxidase is the component of the respiratory chain that catalyzes the reduction of oxygen to water. Electrons originating from reduced cytochrome c in the intermembrane space (IMS) are transferred via the dinuclear copper A center (CU(A)) of subunit 2 and heme A of subunit 1 to the active site in subunit 1, a binuclear center (BNC) formed by heme A3 and copper B (CU(B)). The BNC reduces molecular oxygen to 2 water molecules using 4 electrons from cytochrome c in the IMS and 4 protons from the mitochondrial matrix. The polypeptide is Cytochrome c oxidase subunit 3 (COIII) (Metridium senile (Brown sea anemone)).